The following is a 727-amino-acid chain: UvrABC system protein C (727 aa).

The region spanning 16-95 is the GIY-YIG domain; it reads VDPGVYKFRD…IKEFDPRFNV (80 aa). Residues 208–243 enclose the UVR domain; that stretch reads DRLVRQLEARMQEASEELDFETAARLRDDVGALRRA. 2 disordered regions span residues 503–527 and 679–727; these read DADQ…QTGR and SADV…TGVE. Residues 701–711 show a composition bias toward basic and acidic residues; that stretch reads NGADIPREPVE. A compositionally biased stretch (polar residues) spans 718 to 727; that stretch reads QSASQRTGVE.

This sequence belongs to the UvrC family. Interacts with UvrB in an incision complex.

The protein localises to the cytoplasm. Functionally, the UvrABC repair system catalyzes the recognition and processing of DNA lesions. UvrC both incises the 5' and 3' sides of the lesion. The N-terminal half is responsible for the 3' incision and the C-terminal half is responsible for the 5' incision. In Rhodococcus jostii (strain RHA1), this protein is UvrABC system protein C.